We begin with the raw amino-acid sequence, 148 residues long: Proline-rich protein 13 (148 aa).

The interval 1-148 (MWNPNAGQPG…SSSSSSSDSD (148 aa)) is disordered. Composition is skewed to pro residues over residues 27-67 (AHPP…PQPG) and 75-93 (GPYP…PVNP). Basic residues predominate over residues 109–135 (MQKKMKKAHKKMHKHQKHHKYHKHGKH). The span at 136–148 (SSSSSSSSSSDSD) shows a compositional bias: low complexity.

The protein resides in the nucleus. In terms of biological role, negatively regulates TSP1 expression at the level of transcription. This down-regulation was shown to reduce taxane-induced apoptosis. The sequence is that of Proline-rich protein 13 (PRR13) from Homo sapiens (Human).